A 66-amino-acid polypeptide reads, in one-letter code: Large ribosomal subunit protein bL33c (66 aa).

As to quaternary structure, component of the chloroplast large ribosomal subunit (LSU). Mature 70S chloroplast ribosomes of higher plants consist of a small (30S) and a large (50S) subunit. The 30S small subunit contains 1 molecule of ribosomal RNA (16S rRNA) and 24 different proteins. The 50S large subunit contains 3 rRNA molecules (23S, 5S and 4.5S rRNA) and 33 different proteins.

It is found in the plastid. The protein resides in the chloroplast. Its function is as follows. Component of the chloroplast ribosome (chloro-ribosome), a dedicated translation machinery responsible for the synthesis of chloroplast genome-encoded proteins, including proteins of the transcription and translation machinery and components of the photosynthetic apparatus. In Spinacia oleracea (Spinach), this protein is Large ribosomal subunit protein bL33c (rpl33).